The primary structure comprises 379 residues: Cytochrome b (379 aa).

Transmembrane regions (helical) follow at residues 33 to 53, 77 to 98, 113 to 133, and 178 to 198; these read FGSL…FLAM, WLIR…YLHI, WNIG…GYVL, and FFAF…LHLL. Residues His83 and His97 each contribute to the heme b site. Heme b contacts are provided by His182 and His196. An a ubiquinone-binding site is contributed by His201. 4 consecutive transmembrane segments (helical) span residues 226–246, 288–308, 320–340, and 347–367; these read YKDL…ALFY, LGGV…PILH, ASQL…WIGG, and YIII…VLNP.

Belongs to the cytochrome b family. The cytochrome bc1 complex contains 3 respiratory subunits (MT-CYB, CYC1 and UQCRFS1), 2 core proteins (UQCRC1 and UQCRC2) and probably 6 low-molecular weight proteins. Requires heme b as cofactor.

The protein localises to the mitochondrion inner membrane. Functionally, component of the ubiquinol-cytochrome c reductase complex (complex III or cytochrome b-c1 complex) that is part of the mitochondrial respiratory chain. The b-c1 complex mediates electron transfer from ubiquinol to cytochrome c. Contributes to the generation of a proton gradient across the mitochondrial membrane that is then used for ATP synthesis. The chain is Cytochrome b (mt-cyb) from Anguilla rostrata (American eel).